A 403-amino-acid polypeptide reads, in one-letter code: Formate-dependent phosphoribosylglycinamide formyltransferase (403 aa).

N(1)-(5-phospho-beta-D-ribosyl)glycinamide contacts are provided by residues 27–28 and glutamate 87; that span reads EL. ATP-binding positions include arginine 120, lysine 161, 166 to 171, 201 to 204, and glutamate 209; these read SSGKGQ and EGFV. Residues 125-319 enclose the ATP-grasp domain; sequence RLAAEELGLP…EFELHARAIL (195 aa). Mg(2+)-binding residues include glutamate 278 and glutamate 290. N(1)-(5-phospho-beta-D-ribosyl)glycinamide contacts are provided by residues aspartate 297, lysine 366, and 373–374; that span reads RR. The tract at residues 382-403 is disordered; it reads GPDVETARSRAREAASRVEPVA. Residues 386-397 are compositionally biased toward basic and acidic residues; it reads ETARSRAREAAS.

Belongs to the PurK/PurT family. As to quaternary structure, homodimer.

It catalyses the reaction N(1)-(5-phospho-beta-D-ribosyl)glycinamide + formate + ATP = N(2)-formyl-N(1)-(5-phospho-beta-D-ribosyl)glycinamide + ADP + phosphate + H(+). The protein operates within purine metabolism; IMP biosynthesis via de novo pathway; N(2)-formyl-N(1)-(5-phospho-D-ribosyl)glycinamide from N(1)-(5-phospho-D-ribosyl)glycinamide (formate route): step 1/1. Functionally, involved in the de novo purine biosynthesis. Catalyzes the transfer of formate to 5-phospho-ribosyl-glycinamide (GAR), producing 5-phospho-ribosyl-N-formylglycinamide (FGAR). Formate is provided by PurU via hydrolysis of 10-formyl-tetrahydrofolate. The protein is Formate-dependent phosphoribosylglycinamide formyltransferase of Rhodococcus jostii (strain RHA1).